Here is a 205-residue protein sequence, read N- to C-terminus: GTP cyclohydrolase-2 (205 aa).

49 to 53 is a binding site for GTP; that stretch reads RVHSE. Zn(2+)-binding residues include C54, C65, and C67. GTP-binding positions include Q70, 92 to 94, and T114; that span reads EGR. D126 serves as the catalytic Proton acceptor. The active-site Nucleophile is R128. Positions 149 and 154 each coordinate GTP.

This sequence belongs to the GTP cyclohydrolase II family. It depends on Zn(2+) as a cofactor.

It carries out the reaction GTP + 4 H2O = 2,5-diamino-6-hydroxy-4-(5-phosphoribosylamino)-pyrimidine + formate + 2 phosphate + 3 H(+). The protein operates within cofactor biosynthesis; riboflavin biosynthesis; 5-amino-6-(D-ribitylamino)uracil from GTP: step 1/4. Its function is as follows. Catalyzes the conversion of GTP to 2,5-diamino-6-ribosylamino-4(3H)-pyrimidinone 5'-phosphate (DARP), formate and pyrophosphate. This is GTP cyclohydrolase-2 from Pseudomonas fluorescens (strain SBW25).